A 155-amino-acid polypeptide reads, in one-letter code: MIEKKTVCQIVEEWLEGKDYFLVEVTVSPDDKIVVEIDHAEGVWIEDCVELSRFIESKLNREEEDYELEVGSAGIGQPFKVLQQYYIHIGQEVEVVTRDGRKLAGILKDADEEKFTVGVQKKVKLEGSKRPKLIEEDETFTYEQIKYTKYLISFK.

This sequence belongs to the RimP family.

The protein resides in the cytoplasm. Functionally, required for maturation of 30S ribosomal subunits. This chain is Ribosome maturation factor RimP, found in Bacteroides thetaiotaomicron (strain ATCC 29148 / DSM 2079 / JCM 5827 / CCUG 10774 / NCTC 10582 / VPI-5482 / E50).